The sequence spans 359 residues: Phospho-N-acetylmuramoyl-pentapeptide-transferase (359 aa).

Transmembrane regions (helical) follow at residues 3 to 23 (QILI…PVLI), 55 to 75 (VAIL…GLAL), 84 to 104 (GLLV…DDLI), 120 to 140 (TVGI…FGNA), 156 to 176 (IATV…LVSA), 187 to 207 (LDGL…LITF), 231 to 251 (LALV…WNAA), 255 to 275 (IFMG…LSVT), 280 to 300 (ILAV…VVQI), and 334 to 354 (FWLL…GEWL).

Belongs to the glycosyltransferase 4 family. MraY subfamily. Requires Mg(2+) as cofactor.

It localises to the cell membrane. The catalysed reaction is UDP-N-acetyl-alpha-D-muramoyl-L-alanyl-gamma-D-glutamyl-meso-2,6-diaminopimeloyl-D-alanyl-D-alanine + di-trans,octa-cis-undecaprenyl phosphate = di-trans,octa-cis-undecaprenyl diphospho-N-acetyl-alpha-D-muramoyl-L-alanyl-D-glutamyl-meso-2,6-diaminopimeloyl-D-alanyl-D-alanine + UMP. It participates in cell wall biogenesis; peptidoglycan biosynthesis. Its function is as follows. Catalyzes the initial step of the lipid cycle reactions in the biosynthesis of the cell wall peptidoglycan: transfers peptidoglycan precursor phospho-MurNAc-pentapeptide from UDP-MurNAc-pentapeptide onto the lipid carrier undecaprenyl phosphate, yielding undecaprenyl-pyrophosphoryl-MurNAc-pentapeptide, known as lipid I. This Mycobacterium sp. (strain JLS) protein is Phospho-N-acetylmuramoyl-pentapeptide-transferase.